The primary structure comprises 224 residues: Holliday junction branch migration complex subunit RuvA (224 aa).

Residues 1 to 64 (MIGKVAGILD…EDLLQLFGFP (64 aa)) form a domain I region. Positions 65–143 (TMIEKEWHRL…ALMAMGGGTA (79 aa)) are domain II. The tract at residues 141–185 (GTAALAPSEPPEPEPGTSSGSRRKTRAPEPPRPSHTADALSALAN) is disordered. Residues 144–170 (ALAPSEPPEPEPGTSSGSRRKTRAPEP) form a flexible linker region. A domain III region spans residues 171-224 (PRPSHTADALSALANLGYQPTDAAQAVAQAAGESPDADTAALIRAALKLLAPKS).

It belongs to the RuvA family. Homotetramer. Forms an RuvA(8)-RuvB(12)-Holliday junction (HJ) complex. HJ DNA is sandwiched between 2 RuvA tetramers; dsDNA enters through RuvA and exits via RuvB. An RuvB hexamer assembles on each DNA strand where it exits the tetramer. Each RuvB hexamer is contacted by two RuvA subunits (via domain III) on 2 adjacent RuvB subunits; this complex drives branch migration. In the full resolvosome a probable DNA-RuvA(4)-RuvB(12)-RuvC(2) complex forms which resolves the HJ.

The protein resides in the cytoplasm. Functionally, the RuvA-RuvB-RuvC complex processes Holliday junction (HJ) DNA during genetic recombination and DNA repair, while the RuvA-RuvB complex plays an important role in the rescue of blocked DNA replication forks via replication fork reversal (RFR). RuvA specifically binds to HJ cruciform DNA, conferring on it an open structure. The RuvB hexamer acts as an ATP-dependent pump, pulling dsDNA into and through the RuvAB complex. HJ branch migration allows RuvC to scan DNA until it finds its consensus sequence, where it cleaves and resolves the cruciform DNA. This is Holliday junction branch migration complex subunit RuvA from Cereibacter sphaeroides (strain ATCC 17029 / ATH 2.4.9) (Rhodobacter sphaeroides).